Here is a 493-residue protein sequence, read N- to C-terminus: Glycerol kinase (493 aa).

Thr-13 provides a ligand contact to ADP. Thr-13, Thr-14, and Ser-15 together coordinate ATP. Thr-13 lines the sn-glycerol 3-phosphate pocket. Arg-17 contributes to the ADP binding site. Residues Arg-83, Glu-84, Tyr-135, and Asp-244 each coordinate sn-glycerol 3-phosphate. Residues Arg-83, Glu-84, Tyr-135, Asp-244, and Gln-245 each contribute to the glycerol site. Positions 266 and 309 each coordinate ADP. Residues Thr-266, Gly-309, Gln-313, and Gly-410 each coordinate ATP. Gly-410 and Asn-414 together coordinate ADP.

This sequence belongs to the FGGY kinase family.

It carries out the reaction glycerol + ATP = sn-glycerol 3-phosphate + ADP + H(+). Its pathway is polyol metabolism; glycerol degradation via glycerol kinase pathway; sn-glycerol 3-phosphate from glycerol: step 1/1. With respect to regulation, inhibited by fructose 1,6-bisphosphate (FBP). In terms of biological role, key enzyme in the regulation of glycerol uptake and metabolism. Catalyzes the phosphorylation of glycerol to yield sn-glycerol 3-phosphate. The chain is Glycerol kinase from Shewanella pealeana (strain ATCC 700345 / ANG-SQ1).